Consider the following 514-residue polypeptide: Protein farnesyltransferase subunit beta (514 aa).

A compositionally biased stretch (basic residues) spans 1 to 13 (MRHHTKNLRRRAI). The segment at 1-56 (MRHHTKNLRRRAIFLRTTPRGNMDSSSSVATSTSSSSNHRLVRSSEGSPSAGGDDI) is disordered. A compositionally biased stretch (low complexity) spans 25–39 (SSSSVATSTSSSSNH). PFTB repeat units follow at residues 180–221 (AESL…AVVG), 231–272 (RRAL…SLLN), 293–334 (FTGL…SLLG), 346–388 (IERL…PLIE), and 410–454 (REGL…SSAQ). Residues 319-322 (HGAY) and 367-370 (RTNK) contribute to the (2E,6E)-farnesyl diphosphate site. Positions 373 and 375 each coordinate Zn(2+). 376–379 (YSHW) lines the (2E,6E)-farnesyl diphosphate pocket. Position 442 (histidine 442) interacts with Zn(2+).

It belongs to the protein prenyltransferase subunit beta family. In terms of assembly, heterodimer of an alpha and a beta subunit. Interacts with RAS1 and RAS2. The cofactor is Zn(2+). As to expression, highly expressed in mycelium, conidium, conidial germination, early formed appressorium and the late infection hypha.

It is found in the cytoplasm. The enzyme catalyses L-cysteinyl-[protein] + (2E,6E)-farnesyl diphosphate = S-(2E,6E)-farnesyl-L-cysteinyl-[protein] + diphosphate. Catalyzes the transfer of a farnesyl moiety from farnesyl diphosphate to a cysteine at the fourth position from the C-terminus of several proteins having the C-terminal sequence Cys-aliphatic-aliphatic-X. The beta subunit is responsible for peptide-binding. This chain is Protein farnesyltransferase subunit beta (RAM1), found in Pyricularia oryzae (strain 70-15 / ATCC MYA-4617 / FGSC 8958) (Rice blast fungus).